The chain runs to 85 residues: UPF0291 protein SPH_1589 (85 aa).

Positions 62-85 (TPEKLRQVQREKGLHGRSLDDPNS) are disordered.

Belongs to the UPF0291 family.

The protein localises to the cytoplasm. This is UPF0291 protein SPH_1589 from Streptococcus pneumoniae (strain Hungary19A-6).